Here is a 1528-residue protein sequence, read N- to C-terminus: DNA topoisomerase 2-alpha (1528 aa).

Residue Met-1 is modified to N-acetylmethionine. Ser-4 carries the post-translational modification Phosphoserine. Residue Lys-17 forms a Glycyl lysine isopeptide (Lys-Gly) (interchain with G-Cter in SUMO2) linkage. ATP-binding positions include Asn-90, Asn-119, and 147–149 (SSN). Residues Lys-155 and Lys-156 each participate in a glycyl lysine isopeptide (Lys-Gly) (interchain with G-Cter in SUMO2) cross-link. 160–167 (GRNGYGAK) provides a ligand contact to ATP. At Thr-281 the chain carries Phosphothreonine. Positions 341-343 (KKK) are interaction with DNA. Lys-351 is covalently cross-linked (Glycyl lysine isopeptide (Lys-Gly) (interchain with G-Cter in SUMO2)). 375-377 (QTK) lines the ATP pocket. Glycyl lysine isopeptide (Lys-Gly) (interchain with G-Cter in SUMO2) cross-links involve residues Lys-385, Lys-396, Lys-415, Lys-417, Lys-424, and Lys-439. A Toprim domain is found at 454-571 (CTLILTEGDS…SLLRHRFLEE (118 aa)). Glu-460 serves as a coordination point for Mg(2+). Glycyl lysine isopeptide (Lys-Gly) (interchain with G-Cter in SUMO2) cross-links involve residues Lys-465, Lys-479, and Lys-528. Mg(2+)-binding residues include Asp-540 and Asp-542. Residues Lys-583, Lys-598, Lys-613, Lys-621, Lys-624, Lys-631, Lys-638, Lys-654, Lys-661, and Lys-675 each participate in a glycyl lysine isopeptide (Lys-Gly) (interchain with G-Cter in SUMO2) cross-link. The region spanning 714-1168 (IPSMVDGLKP…SPSDLWKEDL (455 aa)) is the Topo IIA-type catalytic domain. The active-site O-(5'-phospho-DNA)-tyrosine intermediate is Tyr-804. The interval 989–998 (KLQSSLTCNS) is interaction with DNA. Lys-1074 participates in a covalent cross-link: Glycyl lysine isopeptide (Lys-Gly) (interchain with G-Cter in SUMO2). Disordered regions lie at residues 1090–1118 (KEAQQKVPDEEENEESDTETSTSDSAAEA) and 1183–1211 (KQDEQVGLPGKAGKAKGKKAQMCADVLPS). Residues 1098–1107 (DEEENEESDT) show a composition bias toward acidic residues. Ser-1105 bears the Phosphoserine; by CK1 mark. Over residues 1108-1118 (ETSTSDSAAEA) the composition is skewed to low complexity. Residues Lys-1193 and Lys-1201 each participate in a glycyl lysine isopeptide (Lys-Gly) (interchain with G-Cter in SUMO2) cross-link. Ser-1211 carries the post-translational modification Phosphoserine. Lys-1226 participates in a covalent cross-link: Glycyl lysine isopeptide (Lys-Gly) (interchain with G-Cter in SUMO2). Residues 1229–1528 (AEKKIRKKIK…EESDDDDDLF (300 aa)) form a disordered region. Residue Lys-1238 forms a Glycyl lysine isopeptide (Lys-Gly) (interchain with G-Cter in SUMO1); alternate linkage. Residue Lys-1238 forms a Glycyl lysine isopeptide (Lys-Gly) (interchain with G-Cter in SUMO2); alternate linkage. Thr-1245 bears the Phosphothreonine mark. Over residues 1258-1270 (QRIEKKQKKEPGA) the composition is skewed to basic and acidic residues. Residues Lys-1272, Lys-1279, and Lys-1282 each participate in a glycyl lysine isopeptide (Lys-Gly) (interchain with G-Cter in SUMO2) cross-link. Phosphoserine occurs at positions 1291, 1293, 1295, and 1298. Residues 1296 to 1306 (DVSSNESNVDV) are compositionally biased toward low complexity. Residue Thr-1323 is modified to Phosphothreonine. Over residues 1326–1345 (LDSDEDFSGLDEKDEDEDFL) the composition is skewed to acidic residues. Phosphoserine occurs at positions 1328 and 1333. Thr-1350 is modified (phosphothreonine). Residues Lys-1359 and Lys-1363 each participate in a glycyl lysine isopeptide (Lys-Gly) (interchain with G-Cter in SUMO2) cross-link. 2 positions are modified to phosphoserine: Ser-1370 and Ser-1373. A Glycyl lysine isopeptide (Lys-Gly) (interchain with G-Cter in SUMO2) cross-link involves residue Lys-1382. Ser-1384 and Ser-1388 each carry phosphoserine. Residue Lys-1418 forms a Glycyl lysine isopeptide (Lys-Gly) (interchain with G-Cter in SUMO2); alternate linkage. Lys-1418 carries the N6-acetyllysine; alternate modification. The interaction with PLSCR1 stretch occupies residues 1429-1435 (KKRAAPK). Lys-1438 is covalently cross-linked (Glycyl lysine isopeptide (Lys-Gly) (interchain with G-Cter in SUMO2); alternate). The residue at position 1438 (Lys-1438) is an N6-acetyllysine; alternate. Glycyl lysine isopeptide (Lys-Gly) (interchain with G-Cter in SUMO2) cross-links involve residues Lys-1450 and Lys-1455. Residues Ser-1465, Ser-1467, Ser-1470, and Ser-1472 each carry the phosphoserine modification. Glycyl lysine isopeptide (Lys-Gly) (interchain with G-Cter in SUMO2) cross-links involve residues Lys-1480 and Lys-1488. The segment covering 1506-1519 (AKSDRARKPIKYLE) has biased composition (basic and acidic residues). At Ser-1521 the chain carries Phosphoserine.

The protein belongs to the type II topoisomerase family. As to quaternary structure, homodimer. Interacts with COPS5. Interacts with RECQL5; this stimulates DNA decatenation. Interacts with SETMAR; stimulates the topoisomerase activity. Interacts with DHX9; this interaction occurs in a E2 enzyme UBE2I- and RNA-dependent manner, negatively regulates DHX9-mediated double-stranded DNA and RNA duplex helicase activity and stimulates TOP2A-mediated supercoiled DNA relaxation activity. Interacts with HNRNPU (via C-terminus); this interaction protects the topoisomerase TOP2A from degradation and positively regulates the relaxation of supercoiled DNA in a RNA-dependent manner. Interacts with MCM3AP. Interacts with ERCC6. Interacts with PLSCR1. Interacts with GCNA; this interaction allows the resolution of topoisomerase II (TOP2A) DNA-protein cross-links. Interacts with POL1RA/RPA1 (via dock II) and UBTF in the context of Pol I complex; may assist Pol I transcription initiation by releasing supercoils occurring during DNA unwinding. Interacts with TPRN; TPRN interacts with a number of DNA damage response proteins, is recruited to sites of DNA damage and may play a role in DNA damage repair. The cofactor is Mg(2+). Requires Mn(2+) as cofactor. Ca(2+) serves as cofactor. Phosphorylation has no effect on catalytic activity. However, phosphorylation at Ser-1105 by CSNK1D/CK1 promotes DNA cleavable complex formation.

It is found in the cytoplasm. Its subcellular location is the nucleus. It localises to the nucleoplasm. The protein resides in the nucleolus. The catalysed reaction is ATP-dependent breakage, passage and rejoining of double-stranded DNA.. In terms of biological role, key decatenating enzyme that alters DNA topology by binding to two double-stranded DNA molecules, generating a double-stranded break in one of the strands, passing the intact strand through the broken strand, and religating the broken strand. May play a role in regulating the period length of BMAL1 transcriptional oscillation. The protein is DNA topoisomerase 2-alpha (Top2a) of Mus musculus (Mouse).